A 778-amino-acid polypeptide reads, in one-letter code: Probable potassium transporter 13 (778 aa).

The Cytoplasmic portion of the chain corresponds to 1 to 28; sequence MDVEGGGGGGGGAPPRGRNSWGWQKGTL. Residues 29 to 49 traverse the membrane as a helical segment; sequence LLAYQSFGVVYGDLCISPVYV. Topologically, residues 50-72 are extracellular; the sequence is YKNTFSGKLRLHEEDEEILGVLS. Residues 73 to 93 form a helical membrane-spanning segment; it reads LVFWSLTLIPLLKYIILVLGA. The Cytoplasmic segment spans residues 94–156; sequence DDNGEGGTFA…AFFEKHYSLR (63 aa). A helical transmembrane segment spans residues 157–177; it reads VVLLLFVLMGTSMVIGDGVLT. The Extracellular segment spans residues 178-199; it reads PTMSVLAAVSGLRIKFPELHEN. N-linked (GlcNAc...) asparagine glycosylation occurs at Asn199. A helical membrane pass occupies residues 200-220; the sequence is YTVLLACVILIGLFALQHYGT. Residues 221 to 222 are Cytoplasmic-facing; it reads RR. The chain crosses the membrane as a helical span at residues 223-243; sequence VGFLFAPILISWLTCIGGIGI. Residues 244–276 lie on the Extracellular side of the membrane; that stretch reads YNIIKWNPSVIRALSPYYIYNFFRKAGKDGWSS. A helical transmembrane segment spans residues 277–297; sequence LGGIVLCLTGAEAMFADLGHF. Residues 298 to 303 are Cytoplasmic-facing; the sequence is SKLSLR. The helical transmembrane segment at 304–324 threads the bilayer; it reads LGFTIVVYPCLVLAYMGEAAY. The Extracellular segment spans residues 325–343; the sequence is LSKHREDLQSSFYKALPDR. The chain crosses the membrane as a helical span at residues 344–364; it reads VFWPVLFIATLATAVGSQAII. At 365–395 the chain is on the cytoplasmic side; sequence SATFSIISQCRALGCFPRIKVVHTSSHVHGQ. A helical membrane pass occupies residues 396-416; that stretch reads IYIPEVNWVLMSLCLAVTIGF. The Extracellular portion of the chain corresponds to 417–424; sequence RDTEMIGN. Residues 425–445 form a helical membrane-spanning segment; that stretch reads AYGLAVILVMCATTCLMFLVI. At 446–451 the chain is on the cytoplasmic side; it reads TTVWNR. Residues 452-472 traverse the membrane as a helical segment; that stretch reads WVVWAAAFTVVFGSVELLYLS. The Extracellular segment spans residues 473–477; that stretch reads ACLAK. Residues 478 to 498 form a helical membrane-spanning segment; sequence VPHGGWLPLLLSLTTLLVMST. Over 499-778 the chain is Cytoplasmic; it reads WHYGTAMKQQ…LIEVGMAYRV (280 aa). The segment covering 655-677 has biased composition (polar residues); that stretch reads PATSSSGGSNQHAFDAGTTTSSC. Residues 655-704 are disordered; the sequence is PATSSSGGSNQHAFDAGTTTSSCEIDATAGGGGRRKVRFDNDGGGGGEEE.

Belongs to the HAK/KUP transporter (TC 2.A.72.3) family.

Its subcellular location is the membrane. Its function is as follows. High-affinity potassium transporter. The polypeptide is Probable potassium transporter 13 (HAK13) (Oryza sativa subsp. japonica (Rice)).